The sequence spans 498 residues: Nucleoprotein (498 aa).

The Unconventional nuclear localization signal signature appears at 1-18 (MASQGTKRSYEQMETDGE). Positions 1 to 21 (MASQGTKRSYEQMETDGERQN) are disordered. Positions 8–21 (RSYEQMETDGERQN) are enriched in basic and acidic residues. The Bipartite nuclear localization signal motif lies at 198–216 (KRGINDRNFWRGENGRKTR).

Belongs to the influenza viruses nucleoprotein family. As to quaternary structure, homomultimerizes to form the nucleocapsid. May bind host exportin-1/XPO1. Binds to viral genomic RNA. Protein-RNA contacts are mediated by a combination of electrostatic interactions between positively charged residues and the phosphate backbone and planar interactions between aromatic side chains and bases. Late in virus-infected cells, may be cleaved from a 56-kDa protein to a 53-kDa protein by a cellular caspase. This cleavage might be a marker for the onset of apoptosis in infected cells or have a specific function in virus host interaction.

The protein resides in the virion. The protein localises to the host nucleus. Its function is as follows. Encapsidates the negative strand viral RNA, protecting it from nucleases. The encapsidated genomic RNA is termed the ribonucleoprotein (RNP) and serves as template for transcription and replication. The RNP needs to be localized in the host nucleus to start an infectious cycle, but is too large to diffuse through the nuclear pore complex. NP comprises at least 2 nuclear localization signals that are responsible for the active RNP import into the nucleus through cellular importin alpha/beta pathway. Later in the infection, nclear export of RNPs are mediated through viral proteins NEP interacting with M1 which binds nucleoproteins. It is possible that nucleoprotein binds directly host exportin-1/XPO1 and plays an active role in RNPs nuclear export. M1 interaction with RNP seems to hide nucleoprotein's nuclear localization signals. Soon after a virion infects a new cell, M1 dissociates from the RNP under acidification of the virion driven by M2 protein. Dissociation of M1 from RNP unmasks nucleoprotein's nuclear localization signals, targeting the RNP to the nucleus. The chain is Nucleoprotein from Aves (Human).